A 334-amino-acid chain; its full sequence is Cytoplasmic envelopment protein 2 (334 aa).

Belongs to the herpesviridae cytoplasmic envelopment protein 2 family. As to quaternary structure, interacts with cytoplasmic envelopment protein 3 and with the capsid.

The protein localises to the virion tegument. Its subcellular location is the host cytoplasm. It is found in the host nucleus. Functionally, plays a critical role in cytoplasmic virus egress. Participates in the final step of tegumentation and envelope acquisition within the host cytoplasm by directly interacting with the capsid. Upon virion binding to target cell, a signaling cascade is triggered to disrupt the interaction with the capsid, thereby preparing capsid uncoating. This Homo sapiens (Human) protein is Cytoplasmic envelopment protein 2 (ORF33).